The chain runs to 153 residues: Urease accessory protein UreE (153 aa).

Belongs to the UreE family.

The protein resides in the cytoplasm. Its function is as follows. Involved in urease metallocenter assembly. Binds nickel. Probably functions as a nickel donor during metallocenter assembly. The sequence is that of Urease accessory protein UreE from Acetivibrio thermocellus (strain ATCC 27405 / DSM 1237 / JCM 9322 / NBRC 103400 / NCIMB 10682 / NRRL B-4536 / VPI 7372) (Clostridium thermocellum).